Consider the following 384-residue polypeptide: Cell division protein FtsZ (384 aa).

GTP contacts are provided by residues 20-24, 107-109, E138, R142, and N186; these read GGGGN and GTG.

It belongs to the FtsZ family. In terms of assembly, homodimer. Polymerizes to form a dynamic ring structure in a strictly GTP-dependent manner. Interacts directly with several other division proteins.

Its subcellular location is the cytoplasm. In terms of biological role, essential cell division protein that forms a contractile ring structure (Z ring) at the future cell division site. The regulation of the ring assembly controls the timing and the location of cell division. One of the functions of the FtsZ ring is to recruit other cell division proteins to the septum to produce a new cell wall between the dividing cells. Binds GTP and shows GTPase activity. In Buchnera aphidicola subsp. Schizaphis graminum (strain Sg), this protein is Cell division protein FtsZ.